Consider the following 297-residue polypeptide: 4-hydroxy-tetrahydrodipicolinate synthase (297 aa).

A pyruvate-binding site is contributed by threonine 55. The active-site Proton donor/acceptor is tyrosine 144. The active-site Schiff-base intermediate with substrate is the lysine 172. Isoleucine 213 serves as a coordination point for pyruvate.

This sequence belongs to the DapA family. In terms of assembly, homotetramer; dimer of dimers.

It localises to the cytoplasm. The enzyme catalyses L-aspartate 4-semialdehyde + pyruvate = (2S,4S)-4-hydroxy-2,3,4,5-tetrahydrodipicolinate + H2O + H(+). It participates in amino-acid biosynthesis; L-lysine biosynthesis via DAP pathway; (S)-tetrahydrodipicolinate from L-aspartate: step 3/4. Its function is as follows. Catalyzes the condensation of (S)-aspartate-beta-semialdehyde [(S)-ASA] and pyruvate to 4-hydroxy-tetrahydrodipicolinate (HTPA). In Lactococcus lactis subsp. cremoris (strain SK11), this protein is 4-hydroxy-tetrahydrodipicolinate synthase.